Reading from the N-terminus, the 380-residue chain is Putative 8-amino-7-oxononanoate synthase (380 aa).

Residue R18 participates in substrate binding. 106–107 is a binding site for pyridoxal 5'-phosphate; sequence GY. Residue H131 coordinates substrate. Residues S179, 205–208, and 236–239 each bind pyridoxal 5'-phosphate; these read DEAH and TFGK. Position 239 is an N6-(pyridoxal phosphate)lysine (K239). T352 is a substrate binding site.

This sequence belongs to the class-II pyridoxal-phosphate-dependent aminotransferase family. BioF subfamily. As to quaternary structure, homodimer. Pyridoxal 5'-phosphate is required as a cofactor.

It carries out the reaction 6-carboxyhexanoyl-[ACP] + L-alanine + H(+) = (8S)-8-amino-7-oxononanoate + holo-[ACP] + CO2. Its pathway is cofactor biosynthesis; biotin biosynthesis. Its function is as follows. Catalyzes the decarboxylative condensation of pimeloyl-[acyl-carrier protein] and L-alanine to produce 8-amino-7-oxononanoate (AON), [acyl-carrier protein], and carbon dioxide. This is Putative 8-amino-7-oxononanoate synthase (bioF) from Neisseria meningitidis serogroup C (strain 053442).